An 891-amino-acid chain; its full sequence is MSAIDSCEHTVSWKLCEQKYNEATTLLSKLKKLLGNFKENCTSVVVDGHKKPRSESRKKYDAKKQHQSSHFATPVKGVESSEPTEKKKRNKEALWLRARQKKWKEIFELCQKITSLLGGTILIDVSFSMEKDVLTYLWMRVHYQVISFFKHRIYEASTQHDPELLSSLVTMHIQYLNSTIQFYTTLIAIIGELYHLQCLSPLTSFFTSCVTPKTILESPLRKQGSHNWKTSTNSQSRLAALFSSIFEDSCLEVDSVKRLLSGSPSSSSSPLKKDSSSNSLTYEPALTDHKPQYLVLCVYRSLIYIGDVHRYLAEVRSPNVPDYQVSRRYYVMAANVAPDYGVHFHQLGLIEVADARSSSRKSSSGQSSSLKGNVNVEDKRLIQALPAISFFFLSSISPNNVAASSAKTSLFIALKRCFGKTNDGSNPCLYHKESSAISLFLRLYAIAFSNTDADYIQDSGPLFKRVRFLLSESLKSGLFSESSLLQMTYCALAARVLAPFIGFSDSGEHGESYPNLKLATQTTTMFFEVLSDSVNSQLPLQALTSGVSSKKDGNFDDLVERRQYGSLSSNAVLMPMLLPLCVLTSSCLQNGDVWLTKDIRTGLSQIFNRLSFFLENTNQTAPDDSVLVRCSSKSIGLLFFFPLVKVCGVPRDTLQWLYFSNHYPFNEEGKGPQVDDSDALITIALDSLYVLLNMRAKSTPNSTSFSSPPTPHRSPFSGQAFTGMGLSNYSLMSSSSFPSAQSSPTSPFLSGTPSIANQSSSIASLQFGRMVDSLVGPVQPIPAQTTGCSVHSLQQRTFSNESPRAVDSGFSRTSTPFSESTSSYPLVSGNLSSCETHLNGSPQNGHLQGERVLFRPLRSPALNTFSTPATEPPEHLVLSELLKKMVNISNN.

Over residues 48-64 (GHKKPRSESRKKYDAKK) the composition is skewed to basic and acidic residues. The disordered stretch occupies residues 48-86 (GHKKPRSESRKKYDAKKQHQSSHFATPVKGVESSEPTEK). Phosphoserine occurs at positions 261, 263, 265, and 268. The interval 795-822 (QRTFSNESPRAVDSGFSRTSTPFSESTS) is disordered. Positions 810–822 (FSRTSTPFSESTS) are enriched in polar residues.

Its subcellular location is the nucleus. This is an uncharacterized protein from Schizosaccharomyces pombe (strain 972 / ATCC 24843) (Fission yeast).